A 146-amino-acid polypeptide reads, in one-letter code: Probable calcium-binding protein CML40 (146 aa).

In terms of domain architecture, EF-hand 1 spans 7-42 (NKRDEYQRVFSCFDKSHQGKVSVSTIERCVDAIKSG). Residues 44-65 (RAVVDQEDTTNPNPEESTDDKS) are disordered. Positions 116–146 (KSLKDCEVMISQFDINRDGIINFDEFRAMMQ) constitute an EF-hand 2 domain. Ca(2+) contacts are provided by Asp-129, Asn-131, Asp-133, and Glu-140.

Potential calcium sensor. This is Probable calcium-binding protein CML40 (CML40) from Arabidopsis thaliana (Mouse-ear cress).